Here is a 493-residue protein sequence, read N- to C-terminus: Cytochrome P450 2E1 (493 aa).

298 to 303 (FAGTET) contacts substrate. Cys-437 provides a ligand contact to heme.

This sequence belongs to the cytochrome P450 family. Interacts with chaperones HSP70 and HSP90; this interaction is required for initial targeting to mitochondria. The cofactor is heme.

The protein resides in the endoplasmic reticulum membrane. The protein localises to the microsome membrane. It is found in the mitochondrion inner membrane. It catalyses the reaction an organic molecule + reduced [NADPH--hemoprotein reductase] + O2 = an alcohol + oxidized [NADPH--hemoprotein reductase] + H2O + H(+). The catalysed reaction is (5Z,8Z,11Z)-eicosatrienoate + reduced [NADPH--hemoprotein reductase] + O2 = 19-hydroxy-(5Z,8Z,11Z)-eicosatrienoate + oxidized [NADPH--hemoprotein reductase] + H2O + H(+). The enzyme catalyses (5Z,8Z,11Z,14Z,17Z)-eicosapentaenoate + reduced [NADPH--hemoprotein reductase] + O2 = 19-hydroxy-(5Z,8Z,11Z,14Z,17Z)-eicosapentaenoate + oxidized [NADPH--hemoprotein reductase] + H2O + H(+). It carries out the reaction (4Z,7Z,10Z,13Z,16Z,19Z)-docosahexaenoate + reduced [NADPH--hemoprotein reductase] + O2 = 21-hydroxy-(4Z,7Z,10Z,13Z,16Z,19Z)-docosahexaenoate + oxidized [NADPH--hemoprotein reductase] + H2O + H(+). It catalyses the reaction dodecanoate + reduced [NADPH--hemoprotein reductase] + O2 = 11-hydroxydodecanoate + oxidized [NADPH--hemoprotein reductase] + H2O + H(+). The catalysed reaction is tetradecanoate + reduced [NADPH--hemoprotein reductase] + O2 = 13-hydroxytetradecanoate + oxidized [NADPH--hemoprotein reductase] + H2O + H(+). The enzyme catalyses 4-nitrophenol + NADPH + O2 + H(+) = 4-nitrocatechol + NADP(+) + H2O. Its pathway is lipid metabolism; fatty acid metabolism. The omega-1 hydroxylase activity is stimulated by cytochrome b5. A cytochrome P450 monooxygenase involved in the metabolism of fatty acids. Mechanistically, uses molecular oxygen inserting one oxygen atom into a substrate, and reducing the second into a water molecule, with two electrons provided by NADPH via cytochrome P450 reductase (NADPH--hemoprotein reductase). Catalyzes the hydroxylation of carbon-hydrogen bonds. Hydroxylates fatty acids specifically at the omega-1 position displaying the highest catalytic activity for saturated fatty acids. May be involved in the oxidative metabolism of xenobiotics. This chain is Cytochrome P450 2E1 (CYP2E1), found in Macaca mulatta (Rhesus macaque).